Here is a 147-residue protein sequence, read N- to C-terminus: Hemoglobin subunit beta-2 (147 aa).

The Globin domain occupies 3–147 (EWTDEERTII…VVSALGRQYH (145 aa)). 2 residues coordinate heme b: H64 and H93.

The protein belongs to the globin family. Hb 2 is a heterotetramer of two alpha-2 and two beta-2 chains. Hb 3 is a heterotetramer of two alpha-1 and two beta-2 chains. Red blood cells.

Involved in oxygen transport from gills to the various peripheral tissues. The sequence is that of Hemoglobin subunit beta-2 (hbb2) from Gadus morhua (Atlantic cod).